A 330-amino-acid polypeptide reads, in one-letter code: Aspartate--ammonia ligase (330 aa).

Belongs to the class-II aminoacyl-tRNA synthetase family. AsnA subfamily.

The protein resides in the cytoplasm. It catalyses the reaction L-aspartate + NH4(+) + ATP = L-asparagine + AMP + diphosphate + H(+). It participates in amino-acid biosynthesis; L-asparagine biosynthesis; L-asparagine from L-aspartate (ammonia route): step 1/1. This is Aspartate--ammonia ligase from Haemophilus influenzae (strain 86-028NP).